A 583-amino-acid polypeptide reads, in one-letter code: Aspartate--tRNA ligase (583 aa).

An L-aspartate-binding site is contributed by Glu-174. The interval 198 to 201 (QITK) is aspartate. Arg-220 is an L-aspartate binding site. ATP is bound by residues 220 to 222 (RDE) and Gln-229. His-443 contributes to the L-aspartate binding site. Glu-477 is an ATP binding site. Arg-484 lines the L-aspartate pocket. 529–532 (GLDR) is a binding site for ATP.

This sequence belongs to the class-II aminoacyl-tRNA synthetase family. Type 1 subfamily. As to quaternary structure, homodimer.

Its subcellular location is the cytoplasm. It carries out the reaction tRNA(Asp) + L-aspartate + ATP = L-aspartyl-tRNA(Asp) + AMP + diphosphate. Its function is as follows. Catalyzes the attachment of L-aspartate to tRNA(Asp) in a two-step reaction: L-aspartate is first activated by ATP to form Asp-AMP and then transferred to the acceptor end of tRNA(Asp). This Streptococcus agalactiae serotype V (strain ATCC BAA-611 / 2603 V/R) protein is Aspartate--tRNA ligase.